A 146-amino-acid chain; its full sequence is Acidic phospholipase A2 S8-51 (146 aa).

The first 19 residues, 1–19 (MYPAHLLVLLAVCVSLLGA), serve as a signal peptide directing secretion. The propeptide occupies 20-27 (ASIPPQPL). 7 cysteine pairs are disulfide-bonded: cysteine 38-cysteine 98, cysteine 54-cysteine 145, cysteine 56-cysteine 72, cysteine 71-cysteine 126, cysteine 78-cysteine 119, cysteine 87-cysteine 112, and cysteine 105-cysteine 117. Positions 55, 57, and 59 each coordinate Ca(2+). Residue histidine 75 is part of the active site. Aspartate 76 contributes to the Ca(2+) binding site. Residue aspartate 120 is part of the active site.

This sequence belongs to the phospholipase A2 family. Group I subfamily. D49 sub-subfamily. The cofactor is Ca(2+). Expressed by the venom gland.

The protein resides in the secreted. The catalysed reaction is a 1,2-diacyl-sn-glycero-3-phosphocholine + H2O = a 1-acyl-sn-glycero-3-phosphocholine + a fatty acid + H(+). Its function is as follows. Snake venom phospholipase A2 (PLA2) that inhibits collagen-induced platelet aggregation. PLA2 catalyzes the calcium-dependent hydrolysis of the 2-acyl groups in 3-sn-phosphoglycerides. The protein is Acidic phospholipase A2 S8-51 of Austrelaps superbus (Lowland copperhead snake).